The sequence spans 216 residues: Adenylate kinase (216 aa).

10–15 provides a ligand contact to ATP; that stretch reads GSGKGT. The segment at 30-59 is NMP; sequence STGDMLRAAVKEGTPMGVKAKAKMDAGALV. AMP-binding positions include Thr-31, Arg-36, 57–59, 85–88, and Gln-92; these read ALV and GFPR. The segment at 126–163 is LID; sequence GRRTCRDCGKMYHVEFDAPAVADKCDKCGGQLFQRDDD. Arg-127 is an ATP binding site. Zn(2+) is bound by residues Cys-130, Cys-133, Cys-150, and Cys-153. AMP-binding residues include Arg-160 and Arg-171. Residue Lys-199 participates in ATP binding.

Belongs to the adenylate kinase family. In terms of assembly, monomer.

Its subcellular location is the cytoplasm. The enzyme catalyses AMP + ATP = 2 ADP. The protein operates within purine metabolism; AMP biosynthesis via salvage pathway; AMP from ADP: step 1/1. Its function is as follows. Catalyzes the reversible transfer of the terminal phosphate group between ATP and AMP. Plays an important role in cellular energy homeostasis and in adenine nucleotide metabolism. The sequence is that of Adenylate kinase from Syntrophotalea carbinolica (strain DSM 2380 / NBRC 103641 / GraBd1) (Pelobacter carbinolicus).